A 506-amino-acid polypeptide reads, in one-letter code: MAEESRGQRGSGYGLGLSTRTQVTGYQFLARRTAMALTRWRVRMEIEPGRRQTLAVVASVSAALVICLGALLWSFISPSGQLNESPIIADRDSGALYVRVGDRLYPALNLASARLITGRPDNPHLVRSSQIATMPRGPLVGIPGAPSSFSPKSPPASSWLVCDTVATSSSIGSLQGVTVTVIDGTPDLTGHRQILSGSDAVVLRYGGDAWVIREGRRSRIEPTNRAVLLPLGLTPEQVSQARPMSRALFDALPVGPELLVPEVPNAGGPATFPGAPGPIGTVIVTPQISGPQQYSLVLGDGVQTLPPLVAQILQNAGSAGNTKPLTVEPSTLAKMPVVNRLDLSAYPDNPLEVVDIREHPSTCWWWERTAGENRARVRVVSGPTIPVAATEMNKVVSLVKADTSGRQADQVYFGPDHANFVAVTGNNPGAQTSESLWWVTDAGARFGVEDSKEARDALGLTLTPSLAPWVALRLLPQGPTLSRADALVEHDTLPMDMTPAELVVPK.

A helical transmembrane segment spans residues 56–76 (VVASVSAALVICLGALLWSFI).

The protein belongs to the EccB family. As to quaternary structure, part of the ESX-5 / type VII secretion system (T7SS), which is composed of cytosolic and membrane components. The ESX-5 membrane complex is composed of EccB5, EccC5, EccD5 and EccE5.

The protein resides in the cell inner membrane. Its function is as follows. An ATPase. Part of the ESX-5 specialized secretion system, which is responsible for the secretion of EsxN and a number of PE_PGRS and PPE proteins, including PPE41. This Mycobacterium tuberculosis (strain CDC 1551 / Oshkosh) protein is ESX-5 secretion system ATPase EccB5.